Reading from the N-terminus, the 120-residue chain is Large ribosomal subunit protein uL18c (120 aa).

It belongs to the universal ribosomal protein uL18 family. Part of the 50S ribosomal subunit; contacts the 5S rRNA.

It is found in the plastid. The protein localises to the chloroplast. Binds 5S rRNA, forms part of the central protuberance of the 50S subunit. The chain is Large ribosomal subunit protein uL18c (rpl18) from Porphyra purpurea (Red seaweed).